The sequence spans 111 residues: Large ribosomal subunit protein uL29 (111 aa).

Positions 1 to 85 are large ribosomal subunit protein uL29; it reads MTVAKELRQK…TKKTNEAAVN (85 aa). Positions 86-111 are unknown; the sequence is AWKQHLEANKAKLLKSRAKREDASKK.

The protein belongs to the universal ribosomal protein uL29 family.

This Mycoplasma pneumoniae (strain ATCC 29342 / M129 / Subtype 1) (Mycoplasmoides pneumoniae) protein is Large ribosomal subunit protein uL29.